A 239-amino-acid polypeptide reads, in one-letter code: ATP synthase subunit a, chloroplastic (239 aa).

A run of 5 helical transmembrane segments spans residues 30–50 (VLLVSWVAIIILLLLAILGTF), 87–107 (VPFISTLFLFIFVSNWLGALV), 126–146 (INTTVALAMLTSVSYFYAGLS), 191–211 (LVVAVFNLLFPLFLPLPVMVL), and 212–232 (GLFASSIQALIFATLSASYIG).

The protein belongs to the ATPase A chain family. As to quaternary structure, F-type ATPases have 2 components, CF(1) - the catalytic core - and CF(0) - the membrane proton channel. CF(1) has five subunits: alpha(3), beta(3), gamma(1), delta(1), epsilon(1). CF(0) has four main subunits: a, b, b' and c.

Its subcellular location is the plastid. It is found in the chloroplast thylakoid membrane. Its function is as follows. Key component of the proton channel; it plays a direct role in the translocation of protons across the membrane. The protein is ATP synthase subunit a, chloroplastic of Cyanidium caldarium (Red alga).